Consider the following 368-residue polypeptide: Large ribosomal subunit protein bL27m (368 aa).

The transit peptide at 1–20 directs the protein to the mitochondrion; it reads MFSGLHTSKYACQVVVQIRT. The interval 23–44 is disordered; that stretch reads KRAAGSRTSMKDSAGRRLGPKK. The segment covering 31–44 has biased composition (basic and acidic residues); it reads SMKDSAGRRLGPKK.

The protein belongs to the bacterial ribosomal protein bL27 family.

It is found in the mitochondrion. In terms of biological role, component of the large subunit of mitochondrial ribosome. The chain is Large ribosomal subunit protein bL27m (MRPL2) from Candida glabrata (strain ATCC 2001 / BCRC 20586 / JCM 3761 / NBRC 0622 / NRRL Y-65 / CBS 138) (Yeast).